Consider the following 197-residue polypeptide: Dephospho-CoA kinase (197 aa).

The region spanning 2-197 is the DPCK domain; it reads IIGITGGIAS…SALLSLANPR (196 aa). 10–15 serves as a coordination point for ATP; it reads ASGKST.

The protein belongs to the CoaE family.

The protein localises to the cytoplasm. It catalyses the reaction 3'-dephospho-CoA + ATP = ADP + CoA + H(+). The protein operates within cofactor biosynthesis; coenzyme A biosynthesis; CoA from (R)-pantothenate: step 5/5. In terms of biological role, catalyzes the phosphorylation of the 3'-hydroxyl group of dephosphocoenzyme A to form coenzyme A. The polypeptide is Dephospho-CoA kinase (Streptococcus pyogenes serotype M28 (strain MGAS6180)).